The chain runs to 1392 residues: Protein dispatched homolog 3 (1392 aa).

Residues 1–73 (MDTEDDPLLQ…LGWAFTNPCC (73 aa)) are Cytoplasmic-facing. Residues 16–40 (EEQEEEEATGETFLGAQKPGPQPGA) form a disordered region. Residues 74–94 (AGLVLFLGCSIPMALSAFMFL) form a helical membrane-spanning segment. The Lumenal segment spans residues 95-462 (YYPPLDIDIS…YEVRRTFNND (368 aa)). Residues 162 to 248 (GNRSRQASRA…HAAVAANQSR (87 aa)) form a disordered region. N-linked (GlcNAc...) asparagine glycosylation is present at N163. The segment covering 190-199 (SAAQKPTANR) has biased composition (polar residues). The 159-residue stretch at 457-615 (RTFNNDMLLA…LVTMPAALGL (159 aa)) folds into the SSD domain. The helical transmembrane segment at 463–483 (MLLAFISSSCIAALVYILTSC) threads the bilayer. S484 is a topological domain (cytoplasmic). A helical transmembrane segment spans residues 485-505 (VFLSFFGIASIGLSCLVALFL). Residues 506–508 (YHV) are Lumenal-facing. The chain crosses the membrane as a helical span at residues 509 to 529 (VFGIQYLGILNGVAAFVIVGI). At 530-573 (GVDDVFVFINTYRQATHLEDPQLRMIHTVQTAGKATFFTSLTTA) the chain is on the cytoplasmic side. Residues 574 to 594 (AAYAANVFSQIPAVHDFGLFM) form a helical membrane-spanning segment. A topological domain (lumenal) is located at residue S595. The helical transmembrane segment at 596 to 616 (LIVSCCWLAVLVTMPAALGLW) threads the bilayer. At 617 to 729 (SLYLAPLESS…WVLWSAVKSR (113 aa)) the chain is on the cytoplasmic side. Residues 730–750 (WVIVGLFVSILILSLVFASRL) traverse the membrane as a helical segment. Residues 751-1182 (RPASRAPLLF…IFMEIVGVQS (432 aa)) are Lumenal-facing. An N-linked (GlcNAc...) asparagine glycan is attached at N1021. A helical membrane pass occupies residues 1183–1203 (ALCGLVLSLLICVAAVAVFTT). Position 1204 (H1204) is a topological domain, cytoplasmic. Residues 1205 to 1225 (ILLLLPVLLSILGIVCLVVTI) traverse the membrane as a helical segment. The Lumenal segment spans residues 1226–1291 (MYWSGWEMGA…TLEAVRHVGV (66 aa)). Residues 1292-1312 (AIVSSALTTVIATVPLFFCII) form a helical membrane-spanning segment. The Cytoplasmic segment spans residues 1313–1320 (APFAKFGK). Residues 1321 to 1341 (IVALNTGVSILYTLTVSTALL) form a helical membrane-spanning segment. Residues 1342–1358 (GIMAPSSFTRTRTSFLK) are Lumenal-facing. Residues 1359–1379 (ALGAVLLAGALGLGACLVLLQ) traverse the membrane as a helical segment. The Cytoplasmic portion of the chain corresponds to 1380 to 1392 (SGYKIPLPAGASL).

Belongs to the patched family. In terms of tissue distribution, expressed in brain and testis.

It localises to the endoplasmic reticulum membrane. The protein resides in the nucleus membrane. The protein localises to the cytoplasmic vesicle membrane. In terms of biological role, plays a role in neuronal proliferation and differentiation. Plays a role in the accumulation of cellular cholesterol. Involved in intracellular lipid droplet formation. May contribute to cholesterol homeostasis in neuronal cells. This is Protein dispatched homolog 3 from Homo sapiens (Human).